Consider the following 198-residue polypeptide: Transcriptional regulator GfcR (198 aa).

The protein belongs to the purine/pyrimidine phosphoribosyltransferase family. GfcR subfamily.

The protein is Transcriptional regulator GfcR of Methanospirillum hungatei JF-1 (strain ATCC 27890 / DSM 864 / NBRC 100397 / JF-1).